A 238-amino-acid polypeptide reads, in one-letter code: Ribonuclease PH (238 aa).

Phosphate-binding positions include Arg-86 and 124-126 (GTR).

It belongs to the RNase PH family. Homohexameric ring arranged as a trimer of dimers.

The catalysed reaction is tRNA(n+1) + phosphate = tRNA(n) + a ribonucleoside 5'-diphosphate. In terms of biological role, phosphorolytic 3'-5' exoribonuclease that plays an important role in tRNA 3'-end maturation. Removes nucleotide residues following the 3'-CCA terminus of tRNAs; can also add nucleotides to the ends of RNA molecules by using nucleoside diphosphates as substrates, but this may not be physiologically important. Probably plays a role in initiation of 16S rRNA degradation (leading to ribosome degradation) during starvation. The polypeptide is Ribonuclease PH (Psychrobacter cryohalolentis (strain ATCC BAA-1226 / DSM 17306 / VKM B-2378 / K5)).